A 469-amino-acid chain; its full sequence is 3-isopropylmalate dehydratase large subunit (469 aa).

The [4Fe-4S] cluster site is built by cysteine 350, cysteine 410, and cysteine 413.

Belongs to the aconitase/IPM isomerase family. LeuC type 1 subfamily. Heterodimer of LeuC and LeuD. [4Fe-4S] cluster is required as a cofactor.

It carries out the reaction (2R,3S)-3-isopropylmalate = (2S)-2-isopropylmalate. The protein operates within amino-acid biosynthesis; L-leucine biosynthesis; L-leucine from 3-methyl-2-oxobutanoate: step 2/4. Its function is as follows. Catalyzes the isomerization between 2-isopropylmalate and 3-isopropylmalate, via the formation of 2-isopropylmaleate. This chain is 3-isopropylmalate dehydratase large subunit, found in Allorhizobium ampelinum (strain ATCC BAA-846 / DSM 112012 / S4) (Agrobacterium vitis (strain S4)).